Consider the following 256-residue polypeptide: Aspirochlorine biosynthesis protein F (256 aa).

Asn19 carries N-linked (GlcNAc...) asparagine glycosylation. 3 helical membrane passes run 21–41 (SITP…GPHF), 163–183 (LVWV…FFFT), and 214–234 (FGLG…ILAV).

It is found in the membrane. Its pathway is mycotoxin biosynthesis. Part of the gene cluster that mediates the biosynthesis of aspirochlorine (or antibiotic A30641), an unusual halogenated spiro compound with distinctive antifungal properties due to selective inhibition of protein biosynthesis, and which is also active against bacteria, viruses, and murine tumor cells. The non-ribosomal peptide synthetase (NRPS) aclP is responsible the formation of the diketopiperazine (DKP) core from the condensation of 2 phenylalanine residues. One Phe residue is tailored into chlorotyrosine by hydroxylation and chlorination, whereas the second Phe undergoes an unprecedented C-C bond cleavage to be converted into glycine. After formation of the DKP, sulfur is incorporated into the DKP by conjugation with glutathione by aclG, followed by its stepwise degradation to the thiol by aclI, aclJ and aclK, and the dithiol oxidation by aclT. In addition, oxygenases (aclB, aclC, aclL and aclO) and O-methyltransferases (aclM and aclU) act as tailoring enzymes to produce the intermediate dechloroaspirochlorine. Ultimately, chlorination of dechloroaspirochlorine by the halogenase aclH is the last step in the aspirochlorine pathway. The chain is Aspirochlorine biosynthesis protein F from Aspergillus oryzae (strain ATCC 42149 / RIB 40) (Yellow koji mold).